Here is a 62-residue protein sequence, read N- to C-terminus: Large ribosomal subunit protein uL29 (62 aa).

The protein belongs to the universal ribosomal protein uL29 family.

The polypeptide is Large ribosomal subunit protein uL29 (Enterococcus faecalis (strain ATCC 700802 / V583)).